A 1325-amino-acid chain; its full sequence is Cyclic nucleotide-gated channel beta-1 (1325 aa).

Disordered stretches follow at residues 1–124, 147–198, 227–279, 340–470, 482–637, and 659–694; these read MLGW…QVAV, PQPV…SLWL, AVLD…PGDP, WEDA…LDSC, LERT…SQNS, and KEKLIDPDVTSDEESPKPSPAKKAPEPDPAQKPAEA. The Cytoplasmic portion of the chain corresponds to 1 to 732; sequence MLGWVQRVLP…SIDPLTNLMY (732 aa). Positions 43–81 are enriched in acidic residues; sequence PQQEPEPEPEPEPEPEPEPEPEPEPEPEPEPEPVPEEAP. Residues 105–121 show a composition bias toward polar residues; the sequence is LQETQVADPAQPTSQAQ. Residues 370–379 are compositionally biased toward basic and acidic residues; it reads IPRELTKIQE. Acidic residues-rich tracts occupy residues 380–393, 418–463, and 495–517; these read EREDEQEEDEEEKE, EEKE…EEEP, and LPEEKEEKEEEKEEEKEEEEEKK. Residues 518–527 show a composition bias toward basic and acidic residues; sequence EEEVEKKEEG. A compositionally biased stretch (pro residues) spans 560–571; the sequence is TLPPPERPPPSP. A calmodulin-binding CaM1 region spans residues 633–643; that stretch reads ASQNSAIINDR. A helical transmembrane segment spans residues 733 to 754; that stretch reads ILWLFFVVLAWNWNCWLIPVRW. At 755-763 the chain is on the extracellular side; the sequence is AFPYQRADN. Residues 764–785 form a helical membrane-spanning segment; the sequence is IHFWLLMDYLCDFIYLLDITVF. The Cytoplasmic segment spans residues 786–800; sequence QMRLQFVKGGDIITD. A helical transmembrane segment spans residues 801-820; sequence KKEMRNNYLKSRRFKMDLLC. Over 821 to 836 the chain is Extracellular; the sequence is LLPLDFLYLKLGINPL. Residues 837-849 traverse the membrane as a helical segment; it reads LRLPRCLKYMAFF. The Cytoplasmic segment spans residues 850 to 861; that stretch reads EFNNRLEAILSK. A helical membrane pass occupies residues 862-884; sequence AYVYRVIRTTAYLLYSLHLNSCL. Residues 862-961 are ion conduction pathway; that stretch reads AYVYRVIRTT…IGQMRDVVGA (100 aa). Over 885–907 the chain is Extracellular; sequence YYWASAFQGIGSTHWVYDGVGNS. 2 consecutive transmembrane segments (helical) span residues 908-934 and 935-960; these read YIRCYYWAVKTLITIGGLPDPQTLFEI and VFQLLNYFTGVFAFSVMIGQMRDVVG. Residues 961–1325 lie on the Cytoplasmic side of the membrane; sequence AATAGQTYYR…VLEEKKEGAE (365 aa). The C-linker stretch occupies residues 964-1040; that stretch reads AGQTYYRSCM…SIVSKVALFQ (77 aa). Positions 1038–1142 are cNMP-binding domain; sequence LFQGCDRQMI…LDKKDLNEIL (105 aa). The tract at residues 1044-1160 is cyclic nucleotide-binding domain; it reads RQMIFDMLKR…LLRKKARRML (117 aa). 3',5'-cyclic GMP-binding residues include Gly-1105, Glu-1106, Ser-1108, Arg-1118, and Thr-1119. Position 1118 (Arg-1118) interacts with 3',5'-cyclic AMP. Residues 1224 to 1230 are calmodulin-binding CaM2; the sequence is QQQLLEQ. Residues 1226-1250 are compositionally biased toward low complexity; the sequence is QLLEQAKSSQEAGGEEGSGATDQPA. Residues 1226–1325 are disordered; the sequence is QLLEQAKSSQ…VLEEKKEGAE (100 aa). The span at 1262–1279 shows a compositional bias: pro residues; that stretch reads KPPGPPEPSAQSSPPPAS.

The protein belongs to the cyclic nucleotide-gated cation channel (TC 1.A.1.5) family. CNGB1 subfamily. As to expression, rod outer segments. Olfactory sensory neurons.

It is found in the cell projection. The protein localises to the cilium membrane. The catalysed reaction is Ca(2+)(in) = Ca(2+)(out). It carries out the reaction Na(+)(in) = Na(+)(out). It catalyses the reaction K(+)(in) = K(+)(out). The enzyme catalyses NH4(+)(in) = NH4(+)(out). The catalysed reaction is Rb(+)(in) = Rb(+)(out). It carries out the reaction Li(+)(in) = Li(+)(out). It catalyses the reaction Cs(+)(in) = Cs(+)(out). Pore-forming subunit of the rod cyclic nucleotide-gated channel. Mediates rod photoresponses at dim light converting transient changes in intracellular cGMP levels into electrical signals. In the dark, cGMP levels are high and keep the channel open enabling a steady inward current carried by Na(+) and Ca(2+) ions that leads to membrane depolarization and neurotransmitter release from synaptic terminals. Upon photon absorption cGMP levels decline leading to channel closure and membrane hyperpolarization that ultimately slows neurotransmitter release and signals the presence of light, the end point of the phototransduction cascade. Pore-forming subunit of the olfactory cyclic nucleotide-gated channel. Operates in the cilia of olfactory sensory neurons where chemical stimulation of the odorant is converted to an electrical signal. Mediates odorant-induced cAMP-dependent Ca(2+) influx triggering neuron depolarization. The rise of intracellular Ca(2+) levels potentiates the olfactory response by activating Ca(2+)-dependent Cl(-) channels, but it also serves as a negative feedback signal to desensitize the channel for rapid adaptation to odorants. Conducts cGMP- and cAMP-gated ion currents, with permeability for monovalent and divalent cations. The selectivity for Ca(2+) over Na(+) increases with cGMP concentrations, whereas the selectivity among monovalent ions is independent of the cGMP levels. The sequence is that of Cyclic nucleotide-gated channel beta-1 from Mus musculus (Mouse).